The sequence spans 952 residues: Translation initiation factor IF-2 (952 aa).

4 disordered regions span residues 74 to 95 (QRRL…RQLK), 153 to 204 (AAQA…KEEP), 230 to 256 (MHSP…EQAD), and 273 to 319 (DEKG…DVND). Residues 153–168 (AAQADQTDQTDQTDQA) show a composition bias toward low complexity. Basic and acidic residues predominate over residues 232–242 (SPFDRSSEAER). Over residues 286-303 (PGETNAATPAGTASTAGA) the composition is skewed to low complexity. The 171-residue stretch at 449 to 619 (IRPPVITIMG…LAEAEIRELK (171 aa)) folds into the tr-type G domain. Residues 458-465 (GHVDHGKT) are G1. 458 to 465 (GHVDHGKT) is a GTP binding site. Residues 483-487 (GITQH) are G2. A G3 region spans residues 505–508 (DTPG). Residues 505-509 (DTPGH) and 559-562 (NKVD) contribute to the GTP site. The tract at residues 559 to 562 (NKVD) is G4. Residues 595–597 (SAK) are G5.

Belongs to the TRAFAC class translation factor GTPase superfamily. Classic translation factor GTPase family. IF-2 subfamily.

It localises to the cytoplasm. In terms of biological role, one of the essential components for the initiation of protein synthesis. Protects formylmethionyl-tRNA from spontaneous hydrolysis and promotes its binding to the 30S ribosomal subunits. Also involved in the hydrolysis of GTP during the formation of the 70S ribosomal complex. This Chlorobium limicola (strain DSM 245 / NBRC 103803 / 6330) protein is Translation initiation factor IF-2.